We begin with the raw amino-acid sequence, 379 residues long: Lipid-A-disaccharide synthase (379 aa).

This sequence belongs to the LpxB family.

It catalyses the reaction a lipid X + a UDP-2-N,3-O-bis[(3R)-3-hydroxyacyl]-alpha-D-glucosamine = a lipid A disaccharide + UDP + H(+). It participates in bacterial outer membrane biogenesis; LPS lipid A biosynthesis. In terms of biological role, condensation of UDP-2,3-diacylglucosamine and 2,3-diacylglucosamine-1-phosphate to form lipid A disaccharide, a precursor of lipid A, a phosphorylated glycolipid that anchors the lipopolysaccharide to the outer membrane of the cell. This chain is Lipid-A-disaccharide synthase, found in Idiomarina loihiensis (strain ATCC BAA-735 / DSM 15497 / L2-TR).